The primary structure comprises 400 residues: Bifunctional enzyme IspD/IspF (400 aa).

The segment at 1-244 (MSHRVLGTER…LLKERDKMDI (244 aa)) is 2-C-methyl-D-erythritol 4-phosphate cytidylyltransferase. Positions 245–400 (RTGNGYDVHR…ALATVTLVRT (156 aa)) are 2-C-methyl-D-erythritol 2,4-cyclodiphosphate synthase. Residues Asp-251 and His-253 each coordinate a divalent metal cation. Residues 251–253 (DVH) and 277–278 (HS) each bind 4-CDP-2-C-methyl-D-erythritol 2-phosphate. His-285 contributes to the a divalent metal cation binding site. Residues 299–301 (DIG), 375–378 (TTSE), Phe-382, and Arg-385 contribute to the 4-CDP-2-C-methyl-D-erythritol 2-phosphate site.

This sequence in the N-terminal section; belongs to the IspD/TarI cytidylyltransferase family. IspD subfamily. It in the C-terminal section; belongs to the IspF family. A divalent metal cation serves as cofactor.

It carries out the reaction 2-C-methyl-D-erythritol 4-phosphate + CTP + H(+) = 4-CDP-2-C-methyl-D-erythritol + diphosphate. The enzyme catalyses 4-CDP-2-C-methyl-D-erythritol 2-phosphate = 2-C-methyl-D-erythritol 2,4-cyclic diphosphate + CMP. The protein operates within isoprenoid biosynthesis; isopentenyl diphosphate biosynthesis via DXP pathway; isopentenyl diphosphate from 1-deoxy-D-xylulose 5-phosphate: step 2/6. Its pathway is isoprenoid biosynthesis; isopentenyl diphosphate biosynthesis via DXP pathway; isopentenyl diphosphate from 1-deoxy-D-xylulose 5-phosphate: step 4/6. In terms of biological role, bifunctional enzyme that catalyzes the formation of 4-diphosphocytidyl-2-C-methyl-D-erythritol from CTP and 2-C-methyl-D-erythritol 4-phosphate (MEP) (IspD), and catalyzes the conversion of 4-diphosphocytidyl-2-C-methyl-D-erythritol 2-phosphate (CDP-ME2P) to 2-C-methyl-D-erythritol 2,4-cyclodiphosphate (ME-CPP) with a corresponding release of cytidine 5-monophosphate (CMP) (IspF). The chain is Bifunctional enzyme IspD/IspF from Dinoroseobacter shibae (strain DSM 16493 / NCIMB 14021 / DFL 12).